An 882-amino-acid chain; its full sequence is Cadherin-1 (882 aa).

A signal peptide spans 1–23 (MGPWSRSLSALCCCCRCNPWLCR). A propeptide spanning residues 24–154 (EPEPCIPGFG…PHHGLRRQKR (131 aa)) is cleaved from the precursor. Positions 117 to 137 (EVSAHHHHHHSHHDSPSGTQT) are disordered. 5 consecutive Cadherin domains span residues 154–262 (RDWV…KPQF), 263–375 (TQEV…APRF), 376–486 (NPTT…APIF), 487–595 (VPPQ…GPVP), and 594–702 (VPEP…RPAE). Residues 155-709 (DWVIPPISCP…PAEAGLQVPA (555 aa)) lie on the Extracellular side of the membrane. O-linked (Man...) serine glycosylation occurs at S280. Residues T285, T358, T470, T472, and T509 are each glycosylated (O-linked (Man...) threonine). N558 is a glycosylation site (N-linked (GlcNAc...) asparagine). Residues T576, T578, and T580 are each glycosylated (O-linked (Man...) threonine). An N-linked (GlcNAc...) asparagine glycan is attached at N637. The helical transmembrane segment at 710-730 (ILGILGGILAFLILILLLLLL) threads the bilayer. Residues 731 to 882 (VRRRRVVKEP…ADMYGGGEDD (152 aa)) lie on the Cytoplasmic side of the membrane. The tract at residues 747–767 (DTRDNVYYYDEEGGGEEDQDF) is disordered. Phosphotyrosine; by SRC is present on residues Y753, Y754, and Y755. Residues 755 to 767 (YDEEGGGEEDQDF) show a composition bias toward acidic residues. Residues 758 to 769 (EGGGEEDQDFDL) are required for binding CTNND1 and PSEN1. Residues S770, S793, S838, S840, and S846 each carry the phosphoserine modification. Positions 811–882 (IDENLKAADS…ADMYGGGEDD (72 aa)) are required for binding alpha, beta and gamma catenins.

Homodimer; disulfide-linked. Component of an E-cadherin/ catenin adhesion complex composed of at least E-cadherin/CDH1, beta-catenin/CTNNB1 or gamma-catenin/JUP, and potentially alpha-catenin/CTNNA1; the complex is located to adherens junctions. Found in a complex composed of CDH1, RAP1A and PKP3; PKP3 acts as a scaffold protein within the complex, the complex is required for CDH1 localization to mature desmosome cell junctions. Interacts with the TRPV4 and CTNNB1 complex. Interacts with CTNND1. The stable association of CTNNA1 is controversial as CTNNA1 was shown not to bind to F-actin when assembled in the complex. Alternatively, the CTNNA1-containing complex may be linked to F-actin by other proteins such as LIMA1. Interaction with PSEN1, cleaves CDH1 resulting in the disassociation of cadherin-based adherens junctions (CAJs). Interacts with AJAP1 and DLGAP5. Interacts with TBC1D2. Interacts with CAV1. Interacts with PIP5K1C. Interacts with RAB8B. Interacts with DDR1; this stabilizes CDH1 at the cell surface and inhibits its internalization. Interacts with RAPGEF2. Interacts with KLRG1. Forms a ternary complex composed of ADAM10, CADH1 and EPHA4; within the complex, CADH1 is cleaved by ADAM10 which disrupts adherens junctions. Interacts with SPEF1. Interacts with CTNNB1 and PKP2. Interacts with AMOTL2; the interaction may facilitate binding of radial actin fibers to cell junction complexes. Interacts with DSG3; the interaction is required for CDH1 localization to developing adherens junctions. Post-translationally, during apoptosis or with calcium influx, cleaved by a membrane-bound metalloproteinase (ADAM10), PS1/gamma-secretase and caspase-3. Processing by the metalloproteinase, induced by calcium influx, causes disruption of cell-cell adhesion and the subsequent release of beta-catenin into the cytoplasm. The residual membrane-tethered cleavage product is rapidly degraded via an intracellular proteolytic pathway. Cleavage by caspase-3 releases the cytoplasmic tail resulting in disintegration of the actin microfilament system. The gamma-secretase-mediated cleavage promotes disassembly of adherens junctions. During development of the cochlear organ of Corti, cleavage by ADAM10 at adherens junctions promotes pillar cell separation. N-glycosylation at Asn-637 is essential for expression, folding and trafficking. Addition of bisecting N-acetylglucosamine by MGAT3 modulates its cell membrane location. In terms of processing, ubiquitinated by a SCF complex containing SKP2, which requires prior phosphorylation by CK1/CSNK1A1. Ubiquitinated by CBLL1/HAKAI, requires prior phosphorylation at Tyr-754. Post-translationally, O-glycosylated. O-manosylated by TMTC1, TMTC2, TMTC3 or TMTC4. Thr-285 and Thr-509 are O-mannosylated by TMTC2 or TMTC4 but not TMTC1 or TMTC3.

It localises to the cell junction. It is found in the adherens junction. Its subcellular location is the cell membrane. The protein resides in the endosome. The protein localises to the golgi apparatus. It localises to the trans-Golgi network. It is found in the cytoplasm. Its subcellular location is the desmosome. Cadherins are calcium-dependent cell adhesion proteins. They preferentially interact with themselves in a homophilic manner in connecting cells; cadherins may thus contribute to the sorting of heterogeneous cell types. CDH1 is involved in mechanisms regulating cell-cell adhesions, mobility and proliferation of epithelial cells. Promotes organization of radial actin fiber structure and cellular response to contractile forces, via its interaction with AMOTL2 which facilitates anchoring of radial actin fibers to CDH1 junction complexes at the cell membrane. Plays a role in the early stages of desmosome cell-cell junction formation via facilitating the recruitment of DSG2 and DSP to desmosome plaques. Has a potent invasive suppressor role. It is a ligand for integrin alpha-E/beta-7. In terms of biological role, E-Cad/CTF2 promotes non-amyloidogenic degradation of Abeta precursors. Has a strong inhibitory effect on APP C99 and C83 production. This is Cadherin-1 (CDH1) from Bos taurus (Bovine).